We begin with the raw amino-acid sequence, 356 residues long: Protein RecA (356 aa).

78-85 (GPESSGKT) contributes to the ATP binding site.

This sequence belongs to the RecA family.

It localises to the cytoplasm. Its function is as follows. Can catalyze the hydrolysis of ATP in the presence of single-stranded DNA, the ATP-dependent uptake of single-stranded DNA by duplex DNA, and the ATP-dependent hybridization of homologous single-stranded DNAs. It interacts with LexA causing its activation and leading to its autocatalytic cleavage. This is Protein RecA from Paracoccus denitrificans.